A 147-amino-acid chain; its full sequence is D-aminoacyl-tRNA deacylase (147 aa).

Positions 137–138 (GP) match the Gly-cisPro motif, important for rejection of L-amino acids motif.

It belongs to the DTD family. Homodimer.

The protein localises to the cytoplasm. The enzyme catalyses glycyl-tRNA(Ala) + H2O = tRNA(Ala) + glycine + H(+). The catalysed reaction is a D-aminoacyl-tRNA + H2O = a tRNA + a D-alpha-amino acid + H(+). In terms of biological role, an aminoacyl-tRNA editing enzyme that deacylates mischarged D-aminoacyl-tRNAs. Also deacylates mischarged glycyl-tRNA(Ala), protecting cells against glycine mischarging by AlaRS. Acts via tRNA-based rather than protein-based catalysis; rejects L-amino acids rather than detecting D-amino acids in the active site. By recycling D-aminoacyl-tRNA to D-amino acids and free tRNA molecules, this enzyme counteracts the toxicity associated with the formation of D-aminoacyl-tRNA entities in vivo and helps enforce protein L-homochirality. In Exiguobacterium sp. (strain ATCC BAA-1283 / AT1b), this protein is D-aminoacyl-tRNA deacylase.